A 266-amino-acid chain; its full sequence is GATA zinc finger domain-containing protein 1 (266 aa).

The GATA-type zinc finger occupies 9-33 (CSMCKTTSSSMWKKSPQGEILCHHC). Residues 59 to 72 (TTTFATTSAGPSQS) show a composition bias toward low complexity. Residues 59–112 (TTTFATTSAGPSQSNGGGGGKQSKQEIHRRSARLRNTKYKSAPAAEKKVSTKGK) are disordered. Lysine 259 is covalently cross-linked (Glycyl lysine isopeptide (Lys-Gly) (interchain with G-Cter in SUMO2)).

As to quaternary structure, component of a chromatin complex, at least composed of KDM5A, GATAD1 and EMSY. As to expression, expressed in the eye (lens, ciliary body, retina, sclera and conjunctiva) at postnatal day 2 and 10. Not detected anywhere at postnatal day 14.

The protein localises to the nucleus. Component of some chromatin complex recruited to chromatin sites methylated 'Lys-4' of histone H3 (H3K4me), with a preference for trimethylated form (H3K4me3). The sequence is that of GATA zinc finger domain-containing protein 1 (Gatad1) from Mus musculus (Mouse).